Reading from the N-terminus, the 332-residue chain is Autoinducer 2 import system permease protein LsrD (332 aa).

The next 10 membrane-spanning stretches (helical) occupy residues 7–27 (YSWE…FGLI), 45–65 (ICIG…GMDI), 70–90 (TIGL…PLPL), 91–111 (AIII…GLII), 118–138 (LVIT…LSGM), 162–182 (FLGI…FWLL), 216–236 (VYAM…SYFG), 240–260 (SDLG…GGAN), 261–281 (IYGG…VGFL), and 288–308 (AGVP…VVVV).

Belongs to the binding-protein-dependent transport system permease family. AraH/RbsC subfamily. In terms of assembly, the complex is composed of two ATP-binding proteins (LsrA), two transmembrane proteins (LsrC and LsrD) and a solute-binding protein (LsrB).

It localises to the cell inner membrane. In terms of biological role, part of the ABC transporter complex LsrABCD involved in autoinducer 2 (AI-2) import. Probably responsible for the translocation of the substrate across the membrane. This chain is Autoinducer 2 import system permease protein LsrD (lsrD), found in Salmonella typhi.